The primary structure comprises 474 residues: Dihydrolipoyl dehydrogenase (474 aa).

FAD is bound by residues 36–45 (ERYNTLGGVC), Lys-54, and Gly-117. Cys-45 and Cys-50 are disulfide-bonded. Residues 182 to 186 (GGGII) and Glu-205 contribute to the NAD(+) site. The residue at position 220 (Lys-220) is an N6-acetyllysine. Residues Val-238 and 270–273 (AIGR) each bind NAD(+). FAD-binding residues include Asp-313 and Ala-321. His-445 acts as the Proton acceptor in catalysis.

Belongs to the class-I pyridine nucleotide-disulfide oxidoreductase family. In terms of assembly, homodimer. It depends on FAD as a cofactor.

It localises to the cytoplasm. The catalysed reaction is N(6)-[(R)-dihydrolipoyl]-L-lysyl-[protein] + NAD(+) = N(6)-[(R)-lipoyl]-L-lysyl-[protein] + NADH + H(+). Functionally, lipoamide dehydrogenase is a component of the glycine cleavage system as well as of the alpha-ketoacid dehydrogenase complexes. The protein is Dihydrolipoyl dehydrogenase (lpdA) of Shigella flexneri.